Consider the following 233-residue polypeptide: Ribose-5-phosphate isomerase A (233 aa).

Residues 31–34 (SGST), 87–90 (DGAD), and 100–103 (KGGG) each bind substrate. Residue glutamate 109 is the Proton acceptor of the active site. Lysine 127 contacts substrate.

The protein belongs to the ribose 5-phosphate isomerase family. In terms of assembly, homodimer.

It carries out the reaction aldehydo-D-ribose 5-phosphate = D-ribulose 5-phosphate. It participates in carbohydrate degradation; pentose phosphate pathway; D-ribose 5-phosphate from D-ribulose 5-phosphate (non-oxidative stage): step 1/1. Its function is as follows. Catalyzes the reversible conversion of ribose-5-phosphate to ribulose 5-phosphate. The chain is Ribose-5-phosphate isomerase A from Chlamydia caviae (strain ATCC VR-813 / DSM 19441 / 03DC25 / GPIC) (Chlamydophila caviae).